We begin with the raw amino-acid sequence, 451 residues long: UDP-N-acetylmuramoylalanine--D-glutamate ligase (451 aa).

ATP is bound at residue 119-125 (GSNGKTT).

It belongs to the MurCDEF family.

It is found in the cytoplasm. It catalyses the reaction UDP-N-acetyl-alpha-D-muramoyl-L-alanine + D-glutamate + ATP = UDP-N-acetyl-alpha-D-muramoyl-L-alanyl-D-glutamate + ADP + phosphate + H(+). It functions in the pathway cell wall biogenesis; peptidoglycan biosynthesis. Cell wall formation. Catalyzes the addition of glutamate to the nucleotide precursor UDP-N-acetylmuramoyl-L-alanine (UMA). The sequence is that of UDP-N-acetylmuramoylalanine--D-glutamate ligase from Geobacillus kaustophilus (strain HTA426).